Consider the following 562-residue polypeptide: Glycine betaine/proline/choline/ectoine transporter VP1456 (562 aa).

The next 12 membrane-spanning stretches (helical) occupy residues 68-88 (PVFG…LLVE), 110-130 (FFMW…FSPL), 147-167 (VSWL…FWSV), 203-223 (WGVH…FFAF), 243-263 (AWGW…LFGL), 287-307 (GIGT…LSVV), 322-342 (MIVA…TAMG), 373-393 (WTVF…MFIA), 404-424 (FLFA…SVFG), 456-476 (VLPY…VFFI), 503-523 (IFWA…GGKE), and 531-551 (GVVA…VSLV).

This sequence belongs to the BCCT transporter (TC 2.A.15) family.

It localises to the cell inner membrane. Functionally, involved in the uptake of osmoprotectants. Can transport glycine betaine, proline, choline and ectoine. This Vibrio parahaemolyticus serotype O3:K6 (strain RIMD 2210633) protein is Glycine betaine/proline/choline/ectoine transporter VP1456.